Consider the following 606-residue polypeptide: 4-hydroxy-3-methylbut-2-en-1-yl diphosphate synthase (flavodoxin) (606 aa).

Residues Cys513, Cys516, Cys547, and Glu554 each contribute to the [4Fe-4S] cluster site.

The protein belongs to the IspG family. Requires [4Fe-4S] cluster as cofactor.

The enzyme catalyses (2E)-4-hydroxy-3-methylbut-2-enyl diphosphate + oxidized [flavodoxin] + H2O + 2 H(+) = 2-C-methyl-D-erythritol 2,4-cyclic diphosphate + reduced [flavodoxin]. The protein operates within isoprenoid biosynthesis; isopentenyl diphosphate biosynthesis via DXP pathway; isopentenyl diphosphate from 1-deoxy-D-xylulose 5-phosphate: step 5/6. In terms of biological role, converts 2C-methyl-D-erythritol 2,4-cyclodiphosphate (ME-2,4cPP) into 1-hydroxy-2-methyl-2-(E)-butenyl 4-diphosphate. This is 4-hydroxy-3-methylbut-2-en-1-yl diphosphate synthase (flavodoxin) from Chlamydia felis (strain Fe/C-56) (Chlamydophila felis).